A 566-amino-acid polypeptide reads, in one-letter code: Oxygen-dependent choline dehydrogenase (566 aa).

Position 7-36 (7-36 (DYIICGAGSAGNVLATRLTEDPDVTVLLLE)) interacts with FAD. The disordered stretch occupies residues 180–202 (NGYQQEGFGPMDRTVTPKGRRAS). The active-site Proton acceptor is the H474.

Belongs to the GMC oxidoreductase family. The cofactor is FAD.

The catalysed reaction is choline + A = betaine aldehyde + AH2. The enzyme catalyses betaine aldehyde + NAD(+) + H2O = glycine betaine + NADH + 2 H(+). Its pathway is amine and polyamine biosynthesis; betaine biosynthesis via choline pathway; betaine aldehyde from choline (cytochrome c reductase route): step 1/1. Involved in the biosynthesis of the osmoprotectant glycine betaine. Catalyzes the oxidation of choline to betaine aldehyde and betaine aldehyde to glycine betaine at the same rate. This is Oxygen-dependent choline dehydrogenase from Burkholderia orbicola (strain MC0-3).